Here is a 637-residue protein sequence, read N- to C-terminus: Transcription termination factor FttA (637 aa).

Residues 4-71 form a KHa region; it reads EDVLLDLKHK…IAMRPDPRVL (68 aa). Positions 72–139 are KHb; sequence ATPEDSISII…WIPKVVRTPP (68 aa). The segment at 180-383 is metallo-beta-lactamase N-terminus; the sequence is WVRVTALGGC…VISEATYGNA (204 aa). Residues histidine 242, histidine 244, aspartate 246, histidine 247, histidine 329, and aspartate 352 each coordinate Zn(2+). Positions 384 to 578 are beta-Casp; it reads NAFQPALKDA…MEVQVVDGFS (195 aa). Positions 579–637 are metallo-beta-lactamase C-terminus; it reads GHSDRRQLMEYVKRMQPRPERVFTEHGDEKACVDLASSVYKKLKIETRALTNLETVRLL. Histidine 604 serves as a coordination point for Zn(2+).

It belongs to the metallo-beta-lactamase superfamily. RNA-metabolizing metallo-beta-lactamase-like family. FttA subfamily. Homodimer. Interacts with RNA polymerase (RNAP), interacts with the Spt4-Spt5 complex. Requires Zn(2+) as cofactor.

Its function is as follows. Terminates transcription on the whole genome. Termination is linked to FttA-mediated RNA cleavage and does not require NTP hydrolysis. Cleaves endonucleolytically at the RNA exit channel of RNA polymerase (RNAP); the 5'-3' exonuclease activity of this protein degrades the nascent RNA released from RNAP. In Methanosarcina mazei (strain ATCC BAA-159 / DSM 3647 / Goe1 / Go1 / JCM 11833 / OCM 88) (Methanosarcina frisia), this protein is Transcription termination factor FttA.